Reading from the N-terminus, the 182-residue chain is uncharacterized protein (182 aa).

Positions 1 to 23 (MILSDQNFLQTQWKEPQTAQSKN) are enriched in polar residues. The disordered stretch occupies residues 1 to 33 (MILSDQNFLQTQWKEPQTAQSKNTESKCEFHGN).

Belongs to the peptidase M24 family.

This is an uncharacterized protein from Caenorhabditis elegans.